Reading from the N-terminus, the 472-residue chain is D-inositol 3-phosphate glycosyltransferase (472 aa).

H48 contributes to the 1D-myo-inositol 3-phosphate binding site. Residues 54 to 55 (QP) and G62 each bind UDP-N-acetyl-alpha-D-glucosamine. Residues 59-64 (DAGGMN), K117, Y150, T174, and R194 contribute to the 1D-myo-inositol 3-phosphate site. Residues R282, K287, and V348 each contribute to the UDP-N-acetyl-alpha-D-glucosamine site. Residues F357, R358, and A360 each coordinate Mg(2+). 2 residues coordinate UDP-N-acetyl-alpha-D-glucosamine: E370 and E378. Residue T384 participates in Mg(2+) binding.

It belongs to the glycosyltransferase group 1 family. MshA subfamily. In terms of assembly, homodimer.

It carries out the reaction 1D-myo-inositol 3-phosphate + UDP-N-acetyl-alpha-D-glucosamine = 1D-myo-inositol 2-acetamido-2-deoxy-alpha-D-glucopyranoside 3-phosphate + UDP + H(+). Its function is as follows. Catalyzes the transfer of a N-acetyl-glucosamine moiety to 1D-myo-inositol 3-phosphate to produce 1D-myo-inositol 2-acetamido-2-deoxy-glucopyranoside 3-phosphate in the mycothiol biosynthesis pathway. The chain is D-inositol 3-phosphate glycosyltransferase from Streptomyces griseus subsp. griseus (strain JCM 4626 / CBS 651.72 / NBRC 13350 / KCC S-0626 / ISP 5235).